A 329-amino-acid chain; its full sequence is Calponin-3 (329 aa).

Lys23 carries the N6-acetyllysine modification. Residues 26 to 130 (HQAEEDLRNW…TLVALAGLAK (105 aa)) enclose the Calponin-homology (CH) domain. Lys158 carries the post-translational modification N6-methyllysine. Calponin-like repeat units follow at residues 164–189 (IGLQ…RHLY), 204–229 (ISLQ…RDIY), and 243–268 (ISLQ…RQVY). The disordered stretch occupies residues 279–329 (PVIHNGSQGTGTNGSEISDSDYQAEYPDEYHGEYQDDYPRDYQYSDQGIDY). The segment covering 306-318 (DEYHGEYQDDYPR) has biased composition (basic and acidic residues). Ser323 is subject to Phosphoserine.

This sequence belongs to the calponin family. As to expression, expressed in both non-smooth muscle tissues as well as smooth muscle tissues.

Thin filament-associated protein that is implicated in the regulation and modulation of smooth muscle contraction. It is capable of binding to actin, calmodulin and tropomyosin. The interaction of calponin with actin inhibits the actomyosin Mg-ATPase activity. This is Calponin-3 (CNN3) from Homo sapiens (Human).